The primary structure comprises 261 residues: DNA oxidative demethylase ALKBH2 (261 aa).

The segment at 1-57 (MDRFLVKGAQGGLLRKQEEQEPTGEEPAVLGGDKESTRKRPRREAPGNGGHSAGPSW) is disordered. Residues 3–7 (RFLVK) carry the PCNA-binding motif. Substrate contacts are provided by residues 102–104 (FGK) and 122–124 (YTF). Residues 152–257 (TFNFVLINRY…RVNLTFRKIL (106 aa)) form the Fe2OG dioxygenase domain. 2-oxoglutarate-binding residues include Asn-159, Tyr-161, and His-171. Fe cation contacts are provided by His-171 and Asp-173. Asp-174 lines the substrate pocket. 4 residues coordinate 2-oxoglutarate: His-236, Arg-248, Thr-252, and Arg-254. Fe cation is bound at residue His-236.

It belongs to the alkB family. As to quaternary structure, interacts with PCNA homotrimer; this interaction is enhanced during the S-phase of the cell cycle. Interacts with nucleolar proteins NCL, UBTF and NPM1. Interacts with XRCC5-XRCC6 heterodimer. It depends on Fe(2+) as a cofactor. As to expression, detected in colon, small intestine, ovary, testis, prostate, skeletal muscle, heart, liver and urinary bladder.

The protein localises to the nucleus. The protein resides in the nucleolus. Its subcellular location is the nucleoplasm. It catalyses the reaction a methylated nucleobase within DNA + 2-oxoglutarate + O2 = a nucleobase within DNA + formaldehyde + succinate + CO2. The enzyme catalyses an N(1)-methyl-2'-deoxyadenosine in double-stranded DNA + 2-oxoglutarate + O2 = a 2'-deoxyadenosine in double-stranded DNA + formaldehyde + succinate + CO2 + H(+). It carries out the reaction an N(1)-methyl-2'-deoxyadenosine in single-stranded DNA + 2-oxoglutarate + O2 = a 2'-deoxyadenosine in single-stranded DNA + formaldehyde + succinate + CO2 + H(+). The catalysed reaction is an N(3)-methyl-2'-deoxycytidine in double-stranded DNA + 2-oxoglutarate + O2 = a 2'-deoxycytidine in double-stranded DNA + formaldehyde + succinate + CO2 + H(+). It catalyses the reaction an N(3)-methyl-2'-deoxycytidine in single-stranded DNA + 2-oxoglutarate + O2 = a 2'-deoxycytidine in single-stranded DNA + formaldehyde + succinate + CO2 + H(+). The enzyme catalyses a 1,N(6)-etheno-2'-deoxyadenosine in double-stranded DNA + 2-oxoglutarate + O2 + H2O = a 2'-deoxyadenosine in double-stranded DNA + glyoxal + succinate + CO2. It carries out the reaction a 1,N(6)-etheno-2'-deoxyadenosine in single-stranded DNA + 2-oxoglutarate + O2 + H2O = a 2'-deoxyadenosine in single-stranded DNA + glyoxal + succinate + CO2. The catalysed reaction is a 3,N(4)-etheno-2'-deoxycytidine in double-stranded DNA + 2-oxoglutarate + O2 + H2O = a 2'-deoxycytidine in double-stranded DNA + glyoxal + succinate + CO2. It catalyses the reaction a 3,N(4)-etheno-2'-deoxycytidine in single-stranded DNA + 2-oxoglutarate + O2 + H2O = a 2'-deoxycytidine in single-stranded DNA + glyoxal + succinate + CO2. The enzyme catalyses a 1,N(2)-etheno-2'-deoxyguanosine in double-stranded DNA + 2-oxoglutarate + O2 + H2O = a 2'-deoxyguanosine in double-stranded DNA + glyoxal + succinate + CO2. With respect to regulation, activated by ascorbate and magnesium ions. Functionally, dioxygenase that repairs alkylated nucleic acid bases by direct reversal oxidative dealkylation. Can process both double-stranded (ds) and single-stranded (ss) DNA substrates, with a strong preference for dsDNA. Uses molecular oxygen, 2-oxoglutarate and iron as cofactors to oxidize the alkyl groups that are subsequently released as aldehydes, regenerating the undamaged bases. Probes the base pair stability, locates a weakened base pair and flips the damaged base to accommodate the lesion in its active site for efficient catalysis. Repairs monoalkylated bases, specifically N1-methyladenine and N3-methylcytosine, as well as higher order alkyl adducts such as bases modified with exocyclic bridged adducts known as etheno adducts including 1,N6-ethenoadenine, 3,N4-ethenocytosine and 1,N2-ethenoguanine. Acts as a gatekeeper of genomic integrity under alkylation stress. Efficiently repairs alkylated lesions in ribosomal DNA (rDNA). These lesions can cause ss- and dsDNA strand breaks that severely impair rDNA transcription. In a response mechanism to DNA damage, associates with PCNA at replication forks to repair alkylated adducts prior to replication. This chain is DNA oxidative demethylase ALKBH2 (ALKBH2), found in Homo sapiens (Human).